The chain runs to 625 residues: tRNA (uracil-5-)-methyltransferase homolog A (625 aa).

Disordered stretches follow at residues 1–37 (MSENLDNEGPKPMESCGQESSSALSCPTVSVPPAAPA) and 145–165 (RPKADPMARRRRQEGESEPPV). Over residues 27–37 (PTVSVPPAAPA) the composition is skewed to low complexity. In terms of domain architecture, RRM spans 73–146 (FKLELQNVPR…RPLSVRLARP (74 aa)). Residues 180-209 (YAEQLERKQLECEQVLQKLAKEIGSTNRAL) are a coiled coil. S378 bears the Phosphoserine mark. The S-adenosyl-L-methionine site is built by Q411, E461, and D510. Residue C538 is the Nucleophile of the active site. E581 acts as the Proton acceptor in catalysis. Residues 594–625 (GTGVLGPHSPPAQPTPGPPDNTLQETGTFPSS) are disordered. Positions 601–612 (HSPPAQPTPGPP) are enriched in pro residues. S602 carries the phosphoserine modification. The segment covering 614 to 625 (NTLQETGTFPSS) has biased composition (polar residues).

The protein belongs to the class I-like SAM-binding methyltransferase superfamily. RNA M5U methyltransferase family.

It localises to the cytoplasm. The protein resides in the cytosol. It carries out the reaction uridine(54) in tRNA + S-adenosyl-L-methionine = 5-methyluridine(54) in tRNA + S-adenosyl-L-homocysteine + H(+). The enzyme catalyses a uridine in mRNA + S-adenosyl-L-methionine = a 5-methyluridine in mRNA + S-adenosyl-L-homocysteine + H(+). S-adenosyl-L-methionine-dependent methyltransferase that catalyzes the formation of 5-methyl-uridine in tRNAs and some mRNAs. Mainly catalyzes the methylation of uridine at position 54 (m5U54) in cytosolic tRNAs. Also able to mediate the formation of 5-methyl-uridine in some mRNAs. The sequence is that of tRNA (uracil-5-)-methyltransferase homolog A from Homo sapiens (Human).